Consider the following 297-residue polypeptide: MNSSAASPPAVSPHAAPSRTTVRARAALQVELDGGGTARITELRAAVPVLPRRTGGSGRVVVVHLVGGAGGPLAGDDLGLDIIVGAGAHLVVRSVAATVALPGHGAGPSTFALRAQVGPAAMLSFLPEPTVVARGARHRMTTEIILAADARLRYREEIILGRFGEPGGDLETSLRVDVDQAPGPAPTTDAGTAPAPGPRRRPLLHQELRLGPRVPGVAGPAVLAGARAVGSVLVAGPATGLEPVTAAVGDSVALMPLAGPGVLVCALADDALALRRRLDSLAGVLTGSLADPLPVGS.

A compositionally biased stretch (low complexity) spans 1–18 (MNSSAASPPAVSPHAAPS). 2 disordered regions span residues 1–20 (MNSSAASPPAVSPHAAPSRT) and 178–201 (VDQAPGPAPTTDAGTAPAPGPRRR).

It belongs to the UreD family. As to quaternary structure, ureD, UreF and UreG form a complex that acts as a GTP-hydrolysis-dependent molecular chaperone, activating the urease apoprotein by helping to assemble the nickel containing metallocenter of UreC. The UreE protein probably delivers the nickel.

It localises to the cytoplasm. Its function is as follows. Required for maturation of urease via the functional incorporation of the urease nickel metallocenter. The polypeptide is Urease accessory protein UreD (Parafrankia sp. (strain EAN1pec)).